The sequence spans 168 residues: Calcium-binding protein 2 (168 aa).

EF-hand domains lie at Gly-13–Lys-48, Lys-48–Glu-83, Val-88–Glu-123, and Asp-124–Ser-159. Ca(2+) contacts are provided by Asp-26, Asp-28, Asn-30, Lys-32, Glu-37, Asp-61, Asp-63, Asn-65, Glu-67, Glu-72, Asp-101, Asp-103, Asp-105, Lys-107, Glu-112, Asp-137, Asp-139, Asp-141, and Glu-148.

In terms of biological role, not known; probably binds four calcium ions. The sequence is that of Calcium-binding protein 2 (cbp2) from Dictyostelium discoideum (Social amoeba).